We begin with the raw amino-acid sequence, 269 residues long: Formamidopyrimidine-DNA glycosylase (269 aa).

Residue P2 is the Schiff-base intermediate with DNA of the active site. The Proton donor role is filled by E3. Catalysis depends on K57, which acts as the Proton donor; for beta-elimination activity. Positions 90, 109, and 150 each coordinate DNA. The FPG-type zinc-finger motif lies at 235 to 269; the sequence is QVYGRKGEPCRVCGTPIVATKHAQRATFYCRQCQK. R259 (proton donor; for delta-elimination activity) is an active-site residue.

Belongs to the FPG family. Monomer. It depends on Zn(2+) as a cofactor.

It carries out the reaction Hydrolysis of DNA containing ring-opened 7-methylguanine residues, releasing 2,6-diamino-4-hydroxy-5-(N-methyl)formamidopyrimidine.. It catalyses the reaction 2'-deoxyribonucleotide-(2'-deoxyribose 5'-phosphate)-2'-deoxyribonucleotide-DNA = a 3'-end 2'-deoxyribonucleotide-(2,3-dehydro-2,3-deoxyribose 5'-phosphate)-DNA + a 5'-end 5'-phospho-2'-deoxyribonucleoside-DNA + H(+). Its function is as follows. Involved in base excision repair of DNA damaged by oxidation or by mutagenic agents. Acts as a DNA glycosylase that recognizes and removes damaged bases. Has a preference for oxidized purines, such as 7,8-dihydro-8-oxoguanine (8-oxoG). Has AP (apurinic/apyrimidinic) lyase activity and introduces nicks in the DNA strand. Cleaves the DNA backbone by beta-delta elimination to generate a single-strand break at the site of the removed base with both 3'- and 5'-phosphates. This Escherichia coli O6:K15:H31 (strain 536 / UPEC) protein is Formamidopyrimidine-DNA glycosylase.